Consider the following 459-residue polypeptide: ATP synthase subunit beta (459 aa).

148–155 contributes to the ATP binding site; that stretch reads GGAGVGKT.

This sequence belongs to the ATPase alpha/beta chains family. F-type ATPases have 2 components, CF(1) - the catalytic core - and CF(0) - the membrane proton channel. CF(1) has five subunits: alpha(3), beta(3), gamma(1), delta(1), epsilon(1). CF(0) has three main subunits: a(1), b(2) and c(9-12). The alpha and beta chains form an alternating ring which encloses part of the gamma chain. CF(1) is attached to CF(0) by a central stalk formed by the gamma and epsilon chains, while a peripheral stalk is formed by the delta and b chains.

The protein localises to the cell inner membrane. It catalyses the reaction ATP + H2O + 4 H(+)(in) = ADP + phosphate + 5 H(+)(out). Produces ATP from ADP in the presence of a proton gradient across the membrane. The catalytic sites are hosted primarily by the beta subunits. The sequence is that of ATP synthase subunit beta from Thiobacillus denitrificans (strain ATCC 25259 / T1).